The chain runs to 1481 residues: Cystic fibrosis transmembrane conductance regulator (1481 aa).

Residues Met-1 to Phe-77 are Cytoplasmic-facing. Residues Phe-78–Gln-98 form a helical membrane-spanning segment. An ABC transmembrane type-1 1 domain is found at Phe-81–Leu-365. Residues Pro-99 to Tyr-122 are Extracellular-facing. A helical transmembrane segment spans residues Leu-123–His-146. The Cytoplasmic segment spans residues His-147–Leu-195. The chain crosses the membrane as a helical span at residues Ala-196–Trp-216. The Extracellular portion of the chain corresponds to Glu-217–Ser-222. Residues Ala-223–Met-243 traverse the membrane as a helical segment. Residues Met-244–Lys-298 lie on the Cytoplasmic side of the membrane. Residues Ala-299–Phe-319 traverse the membrane as a helical segment. Residues Leu-320 to Thr-339 lie on the Extracellular side of the membrane. Residues Ile-340–Val-358 form a helical membrane-spanning segment. The Cytoplasmic portion of the chain corresponds to Gln-359–Ser-858. Residues Trp-401, Ser-434, Gly-458–Thr-465, and Gln-493 contribute to the ATP site. Residues Asn-423–Gly-646 form the ABC transporter 1 domain. Residue Cys-524 is the site of S-palmitoyl cysteine attachment. 2 positions are modified to phosphoserine: Ser-549 and Ser-660. The segment at Ser-654–Glu-831 is disordered R region. Ser-670 carries the phosphoserine; by PKA modification. Residue Ser-686 is modified to Phosphoserine. Residue Lys-688 forms a Glycyl lysine isopeptide (Lys-Gly) (interchain with G-Cter in ubiquitin) linkage. Ser-700 and Ser-712 each carry phosphoserine. Thr-717 is modified (phosphothreonine). Ser-737, Ser-753, Ser-768, Ser-790, Ser-795, and Ser-813 each carry phosphoserine. A helical transmembrane segment spans residues Leu-859 to Val-879. One can recognise an ABC transmembrane type-1 2 domain in the interval Leu-859–Ser-1155. Over Val-880–Ile-918 the chain is Extracellular. N-linked (GlcNAc...) asparagine glycans are attached at residues Asn-894, Asn-900, and Asn-909. A discontinuously helical transmembrane segment spans residues Tyr-919 to His-939. The Cytoplasmic segment spans residues Thr-940 to Thr-990. The helical transmembrane segment at Ile-991–Leu-1011 threads the bilayer. Residues Gln-1012–Pro-1013 lie on the Extracellular side of the membrane. The chain crosses the membrane as a helical span at residues Tyr-1014–Leu-1034. Topologically, residues Gln-1035–Thr-1095 are cytoplasmic. The helical transmembrane segment at Leu-1096–Phe-1116 threads the bilayer. The Extracellular portion of the chain corresponds to Ile-1117–Gly-1130. Residues Ile-1131–Ile-1151 form a helical membrane-spanning segment. At Asp-1152 to Leu-1481 the chain is on the cytoplasmic side. Positions Met-1211–His-1444 constitute an ABC transporter 2 domain. ATP is bound by residues Tyr-1220 and Gly-1245–Ser-1252. The interval Arg-1387–Leu-1481 is interaction with GORASP2. Cys-1396 carries the S-palmitoyl cysteine lipid modification. Residues Ser-1445 and Ser-1457 each carry the phosphoserine modification. Residues His-1453–Leu-1481 are disordered. Over residues Glu-1471–Leu-1481 the composition is skewed to acidic residues. The short motif at Thr-1479–Leu-1481 is the PDZ-binding element.

Belongs to the ABC transporter superfamily. ABCC family. CFTR transporter (TC 3.A.1.202) subfamily. As to quaternary structure, monomer; does not require oligomerization for channel activity. May form oligomers in the membrane. Interacts with SLC26A3, SLC26A6 and NHERF1. Interacts with SHANK2. Interacts with MYO6. Interacts (via C-terminus) with GOPC (via PDZ domain); this promotes CFTR internalization and thereby decreases channel activity. Interacts with SLC4A7 through NHERF1. Found in a complex with MYO5B and RAB11A. Interacts with ANO1. Interacts with SLC26A8. Interacts with AHCYL1; the interaction increases CFTR activity. Interacts with CSE1L. The core-glycosylated form interacts with GORASP2 (via PDZ GRASP-type 1 domain) in respone to ER stress. Interacts with MARCHF2; the interaction leads to CFTR ubiqtuitination and degradation. Interacts with ADGRG2. Post-translationally, N-glycosylated. In terms of processing, phosphorylated; cAMP treatment promotes phosphorylation and activates the channel. Dephosphorylation decreases the ATPase activity (in vitro). Phosphorylation at PKA sites activates the channel. Phosphorylation at PKC sites enhances the response to phosphorylation by PKA. Phosphorylated by AMPK; this inhibits channel activity. Ubiquitinated, leading to its degradation in the lysosome. Deubiquitination by USP10 in early endosomes enhances its endocytic recycling to the cell membrane. Ubiquitinated by RNF185 during ER stress. Ubiquitinated by MARCHF2.

The protein localises to the apical cell membrane. It is found in the early endosome membrane. Its subcellular location is the cell membrane. It localises to the recycling endosome membrane. The protein resides in the endoplasmic reticulum membrane. The protein localises to the nucleus. The catalysed reaction is ATP + H2O + closed Cl(-) channel = ADP + phosphate + open Cl(-) channel.. The enzyme catalyses chloride(in) = chloride(out). It catalyses the reaction hydrogencarbonate(in) = hydrogencarbonate(out). It carries out the reaction ATP + H2O = ADP + phosphate + H(+). Functionally, epithelial ion channel that plays an important role in the regulation of epithelial ion and water transport and fluid homeostasis. Mediates the transport of chloride ions across the cell membrane. Possesses an intrinsic ATPase activity and utilizes ATP to gate its channel; the passive flow of anions through the channel is gated by cycles of ATP binding and hydrolysis by the ATP-binding domains. The ion channel is also permeable to HCO(3)(-); selectivity depends on the extracellular chloride concentration. Exerts its function also by modulating the activity of other ion channels and transporters. Contributes to the regulation of the pH and the ion content of the epithelial fluid layer. Modulates the activity of the epithelial sodium channel (ENaC) complex, in part by regulating the cell surface expression of the ENaC complex. May regulate bicarbonate secretion and salvage in epithelial cells by regulating the transporter SLC4A7. Can inhibit the chloride channel activity of ANO1. Plays a role in the chloride and bicarbonate homeostasis during sperm epididymal maturation and capacitation. This is Cystic fibrosis transmembrane conductance regulator from Callithrix jacchus (White-tufted-ear marmoset).